We begin with the raw amino-acid sequence, 369 residues long: uncharacterized protein (369 aa).

The residue at position 184 (lysine 184) is an N6-(pyridoxal phosphate)lysine.

Belongs to the class-V pyridoxal-phosphate-dependent aminotransferase family. It depends on pyridoxal 5'-phosphate as a cofactor.

This is an uncharacterized protein from Helicobacter pylori (strain J99 / ATCC 700824) (Campylobacter pylori J99).